The sequence spans 308 residues: MEIHMTSIQELVINFHMTEACNYRCGYCYATWQDNSSDTELHHASENIHSLLLKLADYFFADNSLRQTLKYQSVRINFAGGEPVMLGSRFIDAILFAKQLGFATSIITNGHLLSTVMLKKIAVHLDMLGISFDTGDYLIAQSIGRVDRKKSWLSPARVLDVVTQYRALNPKGKVKINTVVNAYNWRENLTQTITQLKPDKWKLLRVLPVYSKEMTVLQWQYESYVHKHQVHADVIVVEDNDDMWQSYLMINPEGRFYQNAGACKGLTYSPPVLEVGVEEALKYINFNAEAFSKRYQSIHLPLAMSAGA.

A Radical SAM core domain is found at 7–253 (SIQELVINFH…WQSYLMINPE (247 aa)). Cys21, Cys25, and Cys28 together coordinate [4Fe-4S] cluster.

Belongs to the radical SAM superfamily. Viperin family. It depends on [4Fe-4S] cluster as a cofactor.

It catalyses the reaction CTP + AH2 + S-adenosyl-L-methionine = 3'-deoxy-3',4'-didehydro-CTP + 5'-deoxyadenosine + L-methionine + A + H2O + H(+). The catalysed reaction is GTP + AH2 + S-adenosyl-L-methionine = 3'-deoxy-3',4'-didehydro-GTP + 5'-deoxyadenosine + L-methionine + A + H2O + H(+). The enzyme catalyses UTP + AH2 + S-adenosyl-L-methionine = 3'-deoxy-3',4'-didehydro-UTP + 5'-deoxyadenosine + L-methionine + A + H2O + H(+). Its function is as follows. Expression of pVip58 in E.coli (strain MG1655) confers resistance to phages lambda, P1 and T7; delays culture collapse upon infection with T7. Catalyzes the conversion of cytidine triphosphate (CTP) to 3'-deoxy-3',4'-didehydro-CTP (ddhCTP), guanosine triphosphate (GTP) to 3'-deoxy-3',4'-didehydro-GTP (ddhGTP) and uridine triphosphate (UTP) to 3'-deoxy-3',4'-didehydro-UTP (ddhUTP), probably via a SAM-dependent radical mechanism. The modified nucleotide represses transcription from T7 RNA polymerase-directed genes (possibly by acting as chain terminators), strongly suggesting these nucleotides block viral polymerase transcription. The polypeptide is S-adenosylmethionine-dependent nucleotide dehydratase (Pseudoalteromonas ulvae).